A 930-amino-acid chain; its full sequence is Translation initiation factor IF-2 (930 aa).

Low complexity predominate over residues 50–67 (FKPAAAPKVEAKPAAPKV). Disordered regions lie at residues 50 to 196 (FKPA…RIDF) and 260 to 346 (EVVP…HELP). 2 stretches are compositionally biased toward basic and acidic residues: residues 68-90 (SAEK…EAKP) and 110-125 (FKAE…AERR). A compositionally biased stretch (low complexity) spans 129–141 (KGNNRDQQQNGNR). 2 stretches are compositionally biased toward basic and acidic residues: residues 157 to 172 (RDNR…EQGQ) and 262 to 295 (VPEK…DGPR). The segment covering 309 to 318 (NQKNSNWNNN) has biased composition (low complexity). Residues 337–346 (VTERKFHELP) show a composition bias toward basic and acidic residues. A tr-type G domain is found at 432 to 599 (ERPPVVTIMG…TVLLVAEIQE (168 aa)). Residues 441-448 (GHVDHGKT) form a G1 region. Position 441–448 (441–448 (GHVDHGKT)) interacts with GTP. The G2 stretch occupies residues 466 to 470 (GITQH). Positions 487-490 (DTPG) are G3. Residues 487–491 (DTPGH) and 541–544 (NKID) each bind GTP. Residues 541–544 (NKID) are G4. A G5 region spans residues 577–579 (SAK).

The protein belongs to the TRAFAC class translation factor GTPase superfamily. Classic translation factor GTPase family. IF-2 subfamily.

The protein resides in the cytoplasm. One of the essential components for the initiation of protein synthesis. Protects formylmethionyl-tRNA from spontaneous hydrolysis and promotes its binding to the 30S ribosomal subunits. Also involved in the hydrolysis of GTP during the formation of the 70S ribosomal complex. The protein is Translation initiation factor IF-2 of Streptococcus pneumoniae serotype 19F (strain G54).